The primary structure comprises 246 residues: UDP-N-acetyl-D-mannosaminuronic acid transferase (246 aa).

This sequence belongs to the glycosyltransferase 26 family.

It catalyses the reaction UDP-N-acetyl-alpha-D-mannosaminouronate + N-acetyl-alpha-D-glucosaminyl-di-trans,octa-cis-undecaprenyl diphosphate = beta-D-ManNAcA-(1-&gt;4)-alpha-D-GlcNAc-di-trans,octa-cis-undecaprenyl diphosphate + UDP + H(+). Its pathway is bacterial outer membrane biogenesis; enterobacterial common antigen biosynthesis. In terms of biological role, catalyzes the synthesis of Und-PP-GlcNAc-ManNAcA (Lipid II), the second lipid-linked intermediate involved in enterobacterial common antigen (ECA) synthesis. The chain is UDP-N-acetyl-D-mannosaminuronic acid transferase from Yersinia pestis bv. Antiqua (strain Antiqua).